Here is a 339-residue protein sequence, read N- to C-terminus: Phosphoribosylformylglycinamidine cyclo-ligase (339 aa).

Belongs to the AIR synthase family.

It is found in the cytoplasm. The catalysed reaction is 2-formamido-N(1)-(5-O-phospho-beta-D-ribosyl)acetamidine + ATP = 5-amino-1-(5-phospho-beta-D-ribosyl)imidazole + ADP + phosphate + H(+). It functions in the pathway purine metabolism; IMP biosynthesis via de novo pathway; 5-amino-1-(5-phospho-D-ribosyl)imidazole from N(2)-formyl-N(1)-(5-phospho-D-ribosyl)glycinamide: step 2/2. This chain is Phosphoribosylformylglycinamidine cyclo-ligase, found in Streptococcus thermophilus (strain ATCC BAA-491 / LMD-9).